The following is a 357-amino-acid chain: Ribosomal RNA large subunit methyltransferase F (357 aa).

Residues 1–15 are compositionally biased toward polar residues; that stretch reads MPKPPRSTQILSCNA. Residues 1-33 are disordered; that stretch reads MPKPPRSTQILSCNAPNGKPKTQHPSARAKVKR.

It belongs to the methyltransferase superfamily. METTL16/RlmF family.

Its subcellular location is the cytoplasm. The catalysed reaction is adenosine(1618) in 23S rRNA + S-adenosyl-L-methionine = N(6)-methyladenosine(1618) in 23S rRNA + S-adenosyl-L-homocysteine + H(+). Functionally, specifically methylates the adenine in position 1618 of 23S rRNA. The sequence is that of Ribosomal RNA large subunit methyltransferase F from Shewanella putrefaciens (strain CN-32 / ATCC BAA-453).